The primary structure comprises 409 residues: FBD-associated F-box protein At4g10400 (409 aa).

The F-box domain occupies 1-47 (MDRISGLPDEVLVKILSFVPTKVAVSTSILSKRWEFLWMWLTKLKFG). An FBD domain is found at 330–379 (SWNQPSIVPECMLSSLQKFTWFKYLGRPQDRDIAVYILKNACRLRTATIK).

This chain is FBD-associated F-box protein At4g10400, found in Arabidopsis thaliana (Mouse-ear cress).